A 248-amino-acid chain; its full sequence is ATP synthase subunit a, chloroplastic (248 aa).

Transmembrane regions (helical) follow at residues 96–116 (VPFIGTMFLFIFASNWSGALL), 135–155 (INTTVALALLTSVAYFYAGLY), 200–220 (LVVAVLVSLVPLIVPVPMMLL), and 221–241 (GLFTSGIQALIFATLAAAYIG).

It belongs to the ATPase A chain family. As to quaternary structure, F-type ATPases have 2 components, CF(1) - the catalytic core - and CF(0) - the membrane proton channel. CF(1) has five subunits: alpha(3), beta(3), gamma(1), delta(1), epsilon(1). CF(0) has four main subunits: a, b, b' and c.

It localises to the plastid. It is found in the chloroplast thylakoid membrane. In terms of biological role, key component of the proton channel; it plays a direct role in the translocation of protons across the membrane. The protein is ATP synthase subunit a, chloroplastic of Adiantum capillus-veneris (Maidenhair fern).